The primary structure comprises 807 residues: Serine/threonine-protein kinase AfsK (807 aa).

Positions phenylalanine 16–alanine 272 constitute a Protein kinase domain. ATP is bound by residues leucine 22–valine 30 and lysine 44. Serine 71 bears the Phosphoserine; by autocatalysis mark. Catalysis depends on aspartate 138, which acts as the Proton acceptor. Threonine 168 is modified (phosphothreonine; by autocatalysis). 2 disordered regions span residues methionine 292–alanine 328 and alanine 353–alanine 429. Residues arginine 297–arginine 315 show a composition bias toward basic residues. Over residues alanine 353–proline 363 the composition is skewed to low complexity.

The protein belongs to the protein kinase superfamily. Ser/Thr protein kinase family. Interacts (via the N-terminal kinase domain) with KbpA; the interaction prevents autophosphorylation of AfsK. Autophosphorylated mainly on threonine residues. Some phosphorylation on serine residues. Autophosphorylation on Thr-168 is the major site enhancing kinase activity towards AfsR, and is regulated though interaction with KbpA.

The catalysed reaction is L-seryl-[protein] + ATP = O-phospho-L-seryl-[protein] + ADP + H(+). It catalyses the reaction L-threonyl-[protein] + ATP = O-phospho-L-threonyl-[protein] + ADP + H(+). Its function is as follows. Component of the AfsK/AfsR system involved in the response of aerial mycelium formation to glucose. This is Serine/threonine-protein kinase AfsK (afsK) from Streptomyces griseus.